The following is a 384-amino-acid chain: Aurora kinase (384 aa).

Composition is skewed to polar residues over residues 1 to 12 and 19 to 29; these read MSYPNNKENSNN and SVPSKQPQRVL. Residues 1–100 are disordered; sequence MSYPNNKENS…SSSSSSSQSV (100 aa). The span at 30-99 shows a compositional bias: low complexity; the sequence is QQQNTNINNH…SSSSSSSSQS (70 aa). The 251-residue stretch at 110–360 folds into the Protein kinase domain; the sequence is FDIGKLLGMG…LKDVINHPWI (251 aa). Residues 116–124 and Lys139 contribute to the ATP site; that span reads LGMGRFGHV. Asp233 acts as the Proton acceptor in catalysis.

The protein belongs to the protein kinase superfamily. Ser/Thr protein kinase family. Aurora subfamily. Interacts with icpA. Forms a complex at the central spindle.

It localises to the cytoplasm. The protein localises to the chromosome. It is found in the centromere. Its subcellular location is the cytoskeleton. The protein resides in the spindle pole. It localises to the cleavage furrow. The protein localises to the cell projection. It is found in the neuron projection. It carries out the reaction L-seryl-[protein] + ATP = O-phospho-L-seryl-[protein] + ADP + H(+). The enzyme catalyses L-threonyl-[protein] + ATP = O-phospho-L-threonyl-[protein] + ADP + H(+). Part of a chromosomal passenger complex. The sequence is that of Aurora kinase (aurK) from Dictyostelium discoideum (Social amoeba).